A 210-amino-acid polypeptide reads, in one-letter code: Scoloptoxin SSD976 (210 aa).

The signal sequence occupies residues 1 to 23 (MNILLSSTLFVLLMFQIIGSGMG).

In terms of processing, contains 3 disulfide bonds. In terms of tissue distribution, expressed by the venom gland.

It is found in the secreted. In terms of biological role, voltage-gated calcium channel inhibitor. The chain is Scoloptoxin SSD976 from Scolopendra dehaani (Thai centipede).